The primary structure comprises 305 residues: Putative cuticle collagen 90 (305 aa).

Disordered stretches follow at residues 95–117 (AGPP…GDLG) and 146–305 (PPGQ…AKRH). Triple-helical region regions lie at residues 96–125 (GPPG…SGIS), 142–204 (GPAG…PGTA), 208–252 (GAVG…NGRD), and 256–270 (GQPG…VGKD). Over residues 150 to 162 (QGPVGPQGFPGVV) the composition is skewed to low complexity. The span at 278-288 (ARRDSKTESVH) shows a compositional bias: basic and acidic residues.

It belongs to the cuticular collagen family. Collagen polypeptide chains are complexed within the cuticle by disulfide bonds and other types of covalent cross-links.

Nematode cuticles are composed largely of collagen-like proteins. The cuticle functions both as an exoskeleton and as a barrier to protect the worm from its environment. This is Putative cuticle collagen 90 (col-90) from Caenorhabditis elegans.